Here is a 3674-residue protein sequence, read N- to C-terminus: Dystrophin (3674 aa).

The tract at residues 1-236 is actin-binding; it reads MSEVSSDERE…YVTSLFQVLP (236 aa). Calponin-homology (CH) domains are found at residues 11–115 and 130–236; these read DVQK…LHWQ and TNSE…QVLP. The interval 59 to 68 is ANK2- and ANK-3 binding; that stretch reads PKEKGSTRVH. The span at 306–318 shows a compositional bias: polar residues; the sequence is SDPTRSPFPSQRL. Residues 306 to 325 are disordered; the sequence is SDPTRSPFPSQRLESPEDKS. 24 Spectrin repeats span residues 335–443, 444–552, 555–663, 715–824, 826–930, 939–1041, 1044–1150, 1153–1259, 1262–1363, 1364–1459, 1464–1564, 1567–1672, 1675–1774, 1775–1870, 1873–1975, 1988–2097, 2100–2204, 2207–2314, 2315–2412, 2464–2566, 2569–2675, 2678–2791, 2797–2919, and 2924–3029; these read VNLD…NLHK, VLMD…LLQD, LKWQ…QISQ, EIRK…WLEY, NRII…ELQI, RYQE…KLEE, AKLR…ALKG, DKTI…TLEE, ACWH…LLEQ, SIQS…LFQK, EQRL…QLEK, KLSR…LLLE, KHME…KASI, PLKE…KALE, HQWY…TVHE, EISY…KFDR, EKWR…RLEE, NILS…EIEA, HIKD…LRAK, FNRA…QLNE, KDST…VLEE, RLLQ…HLEA, KRLH…RKID, and RLQE…QLHE. Residues 1411–1909 are interaction with SYNM; sequence SDLTSHEISL…PEPQDEKKIK (499 aa). Residues 3044-3077 form the WW domain; the sequence is TSVQGPWERAISPNKVPYYINHETQTTCWDHPKM. Positions 3047 to 3397 are interaction with SYNM; that stretch reads QGPWERAISP…TVLEGDNMET (351 aa). The ZZ-type; degenerate zinc-finger motif lies at 3297-3353; it reads KHQAKCNICKECPIIGFRYRSLKHFNYDICQSCFFSGRVAKGHKMHYPMVEYCTPTT. Zn(2+) contacts are provided by Cys-3302, Cys-3305, Cys-3326, and Cys-3329. The tract at residues 3455–3507 is binds to SNTB1; the sequence is DDEHLLIQHYCQSLNQDSPLSQPRSPAQILISLESEERGELERILADLEEENR. Ser-3472, Ser-3479, and Ser-3489 each carry phosphoserine. 2 disordered regions span residues 3517-3543 and 3590-3674; these read KQQH…QSPR and QAEA…EDTM. Composition is skewed to polar residues over residues 3596-3615 and 3651-3662; these read NGTT…SSQP and QLNNSFPSSRGR. Residues Ser-3601, Ser-3602, Ser-3606, Ser-3612, Ser-3613, and Ser-3655 each carry the phosphoserine modification.

In terms of assembly, interacts with SYNM. Interacts with the syntrophins SNTG1 and SNTG2. Interacts with KRT19. Component of the dystrophin-associated glycoprotein complex which is composed of three subcomplexes: a cytoplasmic complex comprised of DMD (or UTRN), DTNA and a number of syntrophins, such as SNTB1, SNTB2, SNTG1 and SNTG2, the transmembrane dystroglycan complex, and the sarcoglycan-sarcospan complex. Interacts with DAG1 (betaDAG1) with DMD; the interaction is inhibited by phosphorylation on the PPXY motif of DAG1. Interacts with SYNM; SNTA1 and SNTB1. Interacts with CMYA5. Directly interacts with ANK2 and ANK3; these interactions do not interfere with betaDAG1-binding and are necessary for proper localization in muscle cells. Identified in a dystroglycan complex that contains at least PRX, DRP2, UTRN, DMD and DAG1. Interacts with DTNB. Interacts with PGM5; the interaction is direct. Interacts with NOS1; localizes NOS1 to sarcolemma in muscle cells. In terms of tissue distribution, in the retina, expressed in the outer plexiform layer (OPL) and around the blood vessels. Also observed at the vitreal border of the retina corresponding to the inner limiting membrane (ILM). Presynaptically localized in cone pedicles and postsynaptically in bipolar cells (at protein level).

Its subcellular location is the cell membrane. It is found in the sarcolemma. The protein resides in the cytoplasm. It localises to the cytoskeleton. The protein localises to the postsynaptic cell membrane. In terms of biological role, anchors the extracellular matrix to the cytoskeleton via F-actin. Ligand for dystroglycan. Component of the dystrophin-associated glycoprotein complex which accumulates at the neuromuscular junction (NMJ) and at a variety of synapses in the peripheral and central nervous systems and has a structural function in stabilizing the sarcolemma. Also implicated in signaling events and synaptic transmission. In Sus scrofa (Pig), this protein is Dystrophin.